The sequence spans 216 residues: Golgi to ER traffic protein 1 (216 aa).

At 1 to 9 (MFDISSSNL) the chain is on the lumenal side. A helical membrane pass occupies residues 10 to 29 (LISVLVVLFAKQLINAVGKA). Topologically, residues 30–116 (TLENIGWSAY…YISKYIGYMI (87 aa)) are cytoplasmic. A coiled-coil region spans residues 54-105 (LDQKNVELAKVSKERKSISAQDQYARWTKLNRQFDKLTGEINKLKEETSASR). A helical membrane pass occupies residues 117 to 137 (LVTTTLPIWFFRVWFRKAVLF). The Lumenal segment spans residues 138–161 (YFPTGVLPHYLEWFLALPFITTGG). Residues 162–178 (VGLTIWMSAVNNVVSSV) form a helical membrane-spanning segment. Over 179–216 (IFLVKFPFEKEVPFPSKEVGNEKTSINKEEVSGTPAAN) the chain is Cytoplasmic. The tract at residues 193 to 216 (PSKEVGNEKTSINKEEVSGTPAAN) is disordered. Basic and acidic residues predominate over residues 197–209 (VGNEKTSINKEEV).

It belongs to the WRB/GET1 family. In terms of assembly, component of the Golgi to ER traffic (GET) complex, which is composed of GET1, GET2 and GET3. Within the complex, GET1 and GET2 form a heterotetramer which is stabilized by phosphatidylinositol binding and which binds to the GET3 homodimer.

Its subcellular location is the endoplasmic reticulum membrane. The protein resides in the golgi apparatus membrane. Functionally, required for the post-translational delivery of tail-anchored (TA) proteins to the endoplasmic reticulum. Together with GET2, acts as a membrane receptor for soluble GET3, which recognizes and selectively binds the transmembrane domain of TA proteins in the cytosol. The GET complex cooperates with the HDEL receptor ERD2 to mediate the ATP-dependent retrieval of resident ER proteins that contain a C-terminal H-D-E-L retention signal from the Golgi to the ER. This Debaryomyces hansenii (strain ATCC 36239 / CBS 767 / BCRC 21394 / JCM 1990 / NBRC 0083 / IGC 2968) (Yeast) protein is Golgi to ER traffic protein 1.